A 647-amino-acid chain; its full sequence is 5-aminolevulinate synthase, non-specific, mitochondrial (647 aa).

A mitochondrion-targeting transit peptide spans 1-56 (METVVRRCPFLSRVPQAFLQKAGKSLLFYAQNCPKMMEIGAKPAPRALSTSAVLCQ). The segment at 61–112 (TPPANEKDKAAKAEVQQAPDGSQQAPDGSQQTADGTQLPSGHPSLASSQGTG) is disordered. Residues 79–112 (PDGSQQAPDGSQQTADGTQLPSGHPSLASSQGTG) are compositionally biased toward polar residues. Substrate contacts are provided by arginine 224, serine 341, and lysine 360. The pyridoxal 5'-phosphate site is built by serine 393, histidine 421, and threonine 449. Lysine 452 is an active-site residue. Lysine 452 carries the N6-(pyridoxal phosphate)lysine modification. Pyridoxal 5'-phosphate contacts are provided by threonine 481 and threonine 482. Threonine 569 serves as a coordination point for substrate. Position 583 is a hydroxyproline (proline 583).

It belongs to the class-II pyridoxal-phosphate-dependent aminotransferase family. As to quaternary structure, homodimer. Interacts (hydroxylated form) with VHL. Pyridoxal 5'-phosphate serves as cofactor. In normoxia, is hydroxylated at Pro-583, promoting interaction with VHL, initiating ubiquitination and subsequent degradation via the proteasome. Post-translationally, ubiquitinated; in normoxia following hydroxylation and interaction with VHL, leading to its subsequent degradation via the proteasome.

It localises to the mitochondrion inner membrane. It carries out the reaction succinyl-CoA + glycine + H(+) = 5-aminolevulinate + CO2 + CoA. Its pathway is porphyrin-containing compound metabolism; protoporphyrin-IX biosynthesis; 5-aminolevulinate from glycine: step 1/1. In terms of biological role, catalyzes the pyridoxal 5'-phosphate (PLP)-dependent condensation of succinyl-CoA and glycine to form aminolevulinic acid (ALA), with CoA and CO2 as by-products. In Bos taurus (Bovine), this protein is 5-aminolevulinate synthase, non-specific, mitochondrial (ALAS1).